The following is a 90-amino-acid chain: Protein PRAC2 (90 aa).

In terms of tissue distribution, highly expressed in prostate and testis. Also detected in placenta, muscle, colon, peripheral blood leukocytes and skin.

It is found in the nucleus. The protein is Protein PRAC2 of Homo sapiens (Human).